We begin with the raw amino-acid sequence, 135 residues long: Putative pre-16S rRNA nuclease (135 aa).

The protein belongs to the YqgF nuclease family.

The protein localises to the cytoplasm. Its function is as follows. Could be a nuclease involved in processing of the 5'-end of pre-16S rRNA. The chain is Putative pre-16S rRNA nuclease from Christiangramia forsetii (strain DSM 17595 / CGMCC 1.15422 / KT0803) (Gramella forsetii).